The chain runs to 410 residues: Sprouty-related, EVH1 domain-containing protein 2 (410 aa).

A WH1 domain is found at 5 to 122 (THPDDDSYIV…RGVRKAIEDL (118 aa)). A disordered region spans residues 127–171 (TTSSSTLHNEAELGDDDVFTTATDSSSNSSQKREPTTRTISSPTS). The span at 146–156 (TTATDSSSNSS) shows a compositional bias: polar residues. In terms of domain architecture, KBD spans 197 to 252 (SYPQVTFPEDDEEIVRINPREKIWMTGYEDYRHAPVRGKYLDTTEDADSYVRFAKG). Phosphotyrosine is present on residues tyrosine 224 and tyrosine 227. Residues 274-294 (DPKGSVIKTQPPRAKSRRRKE) form a disordered region. An SPR domain is found at 300–408 (RCVYCRDMFN…CRCCGGKHKA (109 aa)).

As to quaternary structure, homodimer and heterodimer. Able to interact with SPRED1 to form heterodimers. Interacts with RAS. May interact with ZDHHC13 (via ANK repeats) and ZDHHC17 (via ANK repeats). Interacts with TESK1. Interacts with NF1. In terms of processing, phosphorylated on serine and threonine residues. Phosphorylated on tyrosine. Phosphorylation of Tyr-224 and Tyr-227 are required for ubiquitination. Ubiquitinated; leading to degradation by the proteasome. Predominantly expressed in lung, liver and testis. In testis, it is specially found in mature spermatids projecting into the lumen of the seminiferous. Strongly expressed in glandular epithelia. Also expressed in embryonic tissues such as heart, lung, liver and brain.

It is found in the cell membrane. Its subcellular location is the cytoplasmic vesicle. The protein resides in the secretory vesicle membrane. The protein localises to the cytoplasm. Functionally, negatively regulates Ras signaling pathways and downstream activation of MAP kinases. Recruits and translocates NF1 to the cell membrane, thereby enabling NF1-dependent hydrolysis of active GTP-bound Ras to inactive GDP-bound Ras. Inhibits fibroblast growth factor (FGF)-induced retinal lens fiber differentiation, probably by inhibiting FGF-mediated phosphorylation of ERK1/2. Inhibits TGFB-induced epithelial-to-mesenchymal transition in lens epithelial cells. The sequence is that of Sprouty-related, EVH1 domain-containing protein 2 (Spred2) from Mus musculus (Mouse).